We begin with the raw amino-acid sequence, 855 residues long: DNA mismatch repair protein MutS (855 aa).

616 to 623 (GPNMGGKS) contributes to the ATP binding site.

It belongs to the DNA mismatch repair MutS family.

Functionally, this protein is involved in the repair of mismatches in DNA. It is possible that it carries out the mismatch recognition step. This protein has a weak ATPase activity. This Salmonella paratyphi C (strain RKS4594) protein is DNA mismatch repair protein MutS.